The following is a 334-amino-acid chain: L-lactate dehydrogenase (334 aa).

The disordered stretch occupies residues 1–22 (MASTKGKLIHEMVPSKERDPPH). Basic and acidic residues predominate over residues 8 to 22 (LIHEMVPSKERDPPH). NAD(+)-binding positions include 31-59 (GQVGMAAAISVLLRDLADELALVDVVEDR) and Arg-101. 3 residues coordinate substrate: Arg-108, Asn-140, and Arg-171. Position 140 (Asn-140) interacts with NAD(+). His-195 functions as the Proton acceptor in the catalytic mechanism. Substrate is bound at residue Thr-250.

This sequence belongs to the LDH/MDH superfamily. LDH family. Homotetramer.

The protein resides in the cytoplasm. The enzyme catalyses (S)-lactate + NAD(+) = pyruvate + NADH + H(+). It functions in the pathway fermentation; pyruvate fermentation to lactate; (S)-lactate from pyruvate: step 1/1. The sequence is that of L-lactate dehydrogenase from Petromyzon marinus (Sea lamprey).